The sequence spans 247 residues: ATP synthase subunit a, chloroplastic (247 aa).

The next 5 membrane-spanning stretches (helical) occupy residues 38-58 (QVLI…TVAV), 95-115 (VPFI…GALL), 134-154 (INTT…AGLT), 199-219 (LVVV…VMFL), and 220-240 (GLFT…AYIG).

Belongs to the ATPase A chain family. As to quaternary structure, F-type ATPases have 2 components, CF(1) - the catalytic core - and CF(0) - the membrane proton channel. CF(1) has five subunits: alpha(3), beta(3), gamma(1), delta(1), epsilon(1). CF(0) has four main subunits: a, b, b' and c.

It is found in the plastid. It localises to the chloroplast thylakoid membrane. Functionally, key component of the proton channel; it plays a direct role in the translocation of protons across the membrane. This chain is ATP synthase subunit a, chloroplastic, found in Platanus occidentalis (Sycamore).